Consider the following 449-residue polypeptide: Cytochrome P450 monooxygenase iliC (449 aa).

Residues 28-44 form a helical membrane-spanning segment; sequence TFAITFMGVKQICTIEG. Position 397 (Cys-397) interacts with heme.

The protein belongs to the cytochrome P450 family. Heme serves as cofactor.

It is found in the membrane. The catalysed reaction is (3E,5S)-3-[(2E,4E,8S,10E,12Z)-1-hydroxy-4,8-dimethyltetradeca-2,4,10,12-tetraen-1-ylidene]-5-[(4-hydroxyphenyl)methyl]pyrrolidine-2,4-dione + reduced [NADPH--hemoprotein reductase] + O2 = 3-[(2E,4E,8S,10E,12Z)-4,8-dimethyltetradeca-2,4,10,12-tetraenoyl]-4-hydroxy-5-(4-hydroxyphenyl)-1,2-dihydropyridin-2-one + oxidized [NADPH--hemoprotein reductase] + 2 H2O. The protein operates within mycotoxin biosynthesis. Cytochrome P450 monooxygenase; part of the gene cluster that mediates the biosynthesis of ilicicolin H, a 4-hydroxy-2-pyridonealkaloid that has potent and broad antifungal activities by inhibiting the mitochondrial respiration chain. IliC catalyzes the ring expansion of the tetramate intermediate to the acyclic 2-pyridone intermediate that contains the trans bis-diene chain. The biosynthesis of ilicicolin H starts with formation of the tetramic acid by the hybrid PKS-NRPS synthetase iliA with the partnering trans-enoyl reductase iliB since iliA lacks a designated enoylreductase (ER) domain. The cytochrome P450 monooxygenase iliC then catalyzes the ring expansion of the tetramate to the acyclic 2-pyridone. The pericyclase iliD further converts the acyclic 2-pyridone into 8-epi-ilicicolin H. 8-epi-ilicicolin H might then spontaneously convert to ilicicolin H since ilicicolin H is produced in the absence of the epimerase iliE, in contrast to what was observed for the Talaromyces variabilis ilicolin H biosynthetic pathway. This is Cytochrome P450 monooxygenase iliC from Hypocrea jecorina (strain QM6a) (Trichoderma reesei).